The sequence spans 121 residues: Small ribosomal subunit protein uS13 (121 aa).

Residues 94-121 (GLPVRGQNTKNNARTRKGKAVAIAGKKK) are disordered. Basic residues predominate over residues 106-121 (ARTRKGKAVAIAGKKK).

The protein belongs to the universal ribosomal protein uS13 family. In terms of assembly, part of the 30S ribosomal subunit. Forms a loose heterodimer with protein S19. Forms two bridges to the 50S subunit in the 70S ribosome.

In terms of biological role, located at the top of the head of the 30S subunit, it contacts several helices of the 16S rRNA. In the 70S ribosome it contacts the 23S rRNA (bridge B1a) and protein L5 of the 50S subunit (bridge B1b), connecting the 2 subunits; these bridges are implicated in subunit movement. Contacts the tRNAs in the A and P-sites. The protein is Small ribosomal subunit protein uS13 of Streptococcus sanguinis (strain SK36).